We begin with the raw amino-acid sequence, 300 residues long: Type 1 fimbrin D-mannose specific adhesin (300 aa).

A signal peptide spans Met-1 to Ser-21.

The protein belongs to the fimbrial protein family.

Its subcellular location is the fimbrium. In terms of biological role, involved in regulation of length and mediation of adhesion of type 1 fimbriae (but not necessary for the production of fimbriae). Adhesin responsible for the binding to D-mannose. It is laterally positioned at intervals in the structure of the type 1 fimbriae. In order to integrate FimH in the fimbriae FimF and FimG are needed. This Escherichia coli (strain K12) protein is Type 1 fimbrin D-mannose specific adhesin (fimH).